We begin with the raw amino-acid sequence, 87 residues long: Small ribosomal subunit protein uS15 (87 aa).

Belongs to the universal ribosomal protein uS15 family. As to quaternary structure, part of the 30S ribosomal subunit. Forms a bridge to the 50S subunit in the 70S ribosome, contacting the 23S rRNA.

In terms of biological role, one of the primary rRNA binding proteins, it binds directly to 16S rRNA where it helps nucleate assembly of the platform of the 30S subunit by binding and bridging several RNA helices of the 16S rRNA. Forms an intersubunit bridge (bridge B4) with the 23S rRNA of the 50S subunit in the ribosome. In Clostridium kluyveri (strain NBRC 12016), this protein is Small ribosomal subunit protein uS15.